The sequence spans 282 residues: Undecaprenyl-diphosphatase (282 aa).

8 helical membrane-spanning segments follow: residues 2–22 (FDFI…FLPV), 47–67 (FTAV…IQLY), 90–110 (WIKV…LNNF), 115–135 (LLNP…FIVI), 152–172 (ITFK…VPGT), 190–210 (FVAA…VTIL), 225–245 (AQLF…LFAI), and 259–279 (IFGW…IAGL).

Belongs to the UppP family.

It localises to the cell membrane. It carries out the reaction di-trans,octa-cis-undecaprenyl diphosphate + H2O = di-trans,octa-cis-undecaprenyl phosphate + phosphate + H(+). Functionally, catalyzes the dephosphorylation of undecaprenyl diphosphate (UPP). Confers resistance to bacitracin. The chain is Undecaprenyl-diphosphatase from Leuconostoc citreum (strain KM20).